The sequence spans 96 residues: Prokineticin Bm8-d (96 aa).

The signal sequence occupies residues 1–19 (MKCFAQIVVLLLVIAFSHG). 5 cysteine pairs are disulfide-bonded: Cys-26–Cys-38, Cys-32–Cys-50, Cys-37–Cys-78, Cys-60–Cys-86, and Cys-80–Cys-95.

The protein belongs to the AVIT (prokineticin) family. As to expression, expressed by the skin glands.

The protein resides in the secreted. Potent agonist for both PKR1/PROKR1 and PKR2/PROKR2, and inducer of a potent and long-lasting hyperalgesia. Also potentiates capsaicin-induced TRPV1 current, when tested on DRG neurons. At subnanomolar concentrations, this protein both induces potent chemotaxis of macrophages and stimulates LPS-induced production of the pro-inflammatory cytokines IL-1 and IL-12. In vivo, potently stimulates the contraction of the guinea-pig gastrointestinal (GI) smooth muscle (nanomolar concentration). This Bombina maxima (Giant fire-bellied toad) protein is Prokineticin Bm8-d.